Here is a 342-residue protein sequence, read N- to C-terminus: MRANYLLLLAATAVQAAPFIKRYENTTAPASQLSTSLADGSTTILGSSSSSVEEDETITSTIVQYVTVTSSDTTYVSATNTLTTTLTTKPTPVITTEAEDDEEDNETITSTILQYVTVTSSDTTYVSATNTLTTTLTTKAAEATESEEEENETITSTILQYVTVTSSDTTYVSATNTITSVLTTKAAVSTNDVSENAKAATTEDDGETTTSTITSIVTITDANGNTEVLTEVAAETSGAEDASYCVPTTVTVTVTAEQTSEVVSTIVHTTQVPLTAEFTLDDTTTTLTSWVDLTSTDLVTITSTSSVYDSYSTGASQSHPISSYSNYTISDYAPPISSYYSL.

The first 16 residues, 1–16, serve as a signal peptide directing secretion; sequence MRANYLLLLAATAVQA. Asn25, Asn105, and Asn151 each carry an N-linked (GlcNAc...) asparagine glycan. The GPI-anchor amidated glycine moiety is linked to residue Gly314. The propeptide at 315 to 342 is removed in mature form; the sequence is ASQSHPISSYSNYTISDYAPPISSYYSL. Residue Asn326 is glycosylated (N-linked (GlcNAc...) asparagine).

The protein localises to the cell membrane. This is Predicted GPI-anchored protein 54 (PGA54) from Candida albicans (strain SC5314 / ATCC MYA-2876) (Yeast).